The chain runs to 404 residues: MKRTIIMMLDSFGVGASADAASFGDVGSDTFGHIAKACAEGKADIGREGPLKLPNLARLGLGHAAMESTGAFAPGFGDNVELIGAYGHAQELSSGKDTPSGHWEMAGVPVLFEWGYFSEHQNSFPKELTDKILARAGLDGFLGNCHASGTTILEELGEEHMRSGKPIFYTSADSVFQIACHEETFGLDNLYRLCAITREELEPYNIGRVIARPFDGTGSSDFARTGNRKDYSLAPPAKTVLDKLNEAGGEVVSVGKIADIYAYCGITKKVKANGLEALFDATLAEVKSAGDNTIVFTNFVDFDSHYGHRRDVAGYAKGLEYFDARLPEMLALLGEDDLLILTADHGCDPTWQGTDHTREYVPVLAFGAGLKAGSLGRRKSFADIGQSIASHFKLEPMAYGESFL.

Residues D10, D303, H308, D344, H345, and H356 each contribute to the Mn(2+) site.

This sequence belongs to the phosphopentomutase family. Requires Mn(2+) as cofactor.

It is found in the cytoplasm. The catalysed reaction is 2-deoxy-alpha-D-ribose 1-phosphate = 2-deoxy-D-ribose 5-phosphate. It carries out the reaction alpha-D-ribose 1-phosphate = D-ribose 5-phosphate. It participates in carbohydrate degradation; 2-deoxy-D-ribose 1-phosphate degradation; D-glyceraldehyde 3-phosphate and acetaldehyde from 2-deoxy-alpha-D-ribose 1-phosphate: step 1/2. Functionally, isomerase that catalyzes the conversion of deoxy-ribose 1-phosphate (dRib-1-P) and ribose 1-phosphate (Rib-1-P) to deoxy-ribose 5-phosphate (dRib-5-P) and ribose 5-phosphate (Rib-5-P), respectively. In Shewanella baltica (strain OS223), this protein is Phosphopentomutase.